The sequence spans 789 residues: ATP-dependent 6-phosphofructokinase (789 aa).

The tract at residues 1 to 404 (MSLKRNIRRL…NLETYKLLTK (404 aa)) is N-terminal catalytic PFK domain 1. ATP is bound by residues Gly41, 104–105 (RC), and 134–137 (GDGS). Residue Asp135 coordinates Mg(2+). Substrate contacts are provided by residues 180–182 (SID), Arg217, 224–226 (MGR), Glu280, Arg307, and 313–316 (HVQR). The active-site Proton acceptor is Asp182. The tract at residues 405–419 (LRTVEKDNLSGGQNF) is interdomain linker. Positions 420–789 (NVAVMNVGAP…EAMEDTEDYD (370 aa)) are C-terminal regulatory PFK domain 2. Beta-D-fructose 2,6-bisphosphate-binding positions include Lys489, 547 to 551 (TISNN), Arg585, 592 to 594 (MGG), Glu647, Arg673, 679 to 682 (HAQQ), and Arg753.

This sequence belongs to the phosphofructokinase type A (PFKA) family. ATP-dependent PFK group I subfamily. Eukaryotic two domain clade 'E' sub-subfamily. Homotetramer. Mg(2+) serves as cofactor.

It is found in the cytoplasm. The enzyme catalyses beta-D-fructose 6-phosphate + ATP = beta-D-fructose 1,6-bisphosphate + ADP + H(+). It functions in the pathway carbohydrate degradation; glycolysis; D-glyceraldehyde 3-phosphate and glycerone phosphate from D-glucose: step 3/4. With respect to regulation, allosterically activated by ADP, AMP, or fructose 2,6-bisphosphate, and allosterically inhibited by ATP or citrate. Catalyzes the phosphorylation of D-fructose 6-phosphate to fructose 1,6-bisphosphate by ATP, the first committing step of glycolysis. The protein is ATP-dependent 6-phosphofructokinase (PFK) of Haemonchus contortus (Barber pole worm).